Consider the following 287-residue polypeptide: ATP synthase gamma chain (287 aa).

Belongs to the ATPase gamma chain family. In terms of assembly, F-type ATPases have 2 components, CF(1) - the catalytic core - and CF(0) - the membrane proton channel. CF(1) has five subunits: alpha(3), beta(3), gamma(1), delta(1), epsilon(1). CF(0) has three main subunits: a, b and c.

It localises to the cell inner membrane. Produces ATP from ADP in the presence of a proton gradient across the membrane. The gamma chain is believed to be important in regulating ATPase activity and the flow of protons through the CF(0) complex. The protein is ATP synthase gamma chain of Parabacteroides distasonis (strain ATCC 8503 / DSM 20701 / CIP 104284 / JCM 5825 / NCTC 11152).